We begin with the raw amino-acid sequence, 226 residues long: Orotate phosphoribosyltransferase (226 aa).

5-phospho-alpha-D-ribose 1-diphosphate-binding positions include Lys26, 73–74 (YK), Arg100, Lys101, Lys104, His106, and 128–136 (EDVTTSGKS). Residues Thr132 and Arg161 each coordinate orotate.

It belongs to the purine/pyrimidine phosphoribosyltransferase family. PyrE subfamily. Homodimer. Mg(2+) is required as a cofactor.

The enzyme catalyses orotidine 5'-phosphate + diphosphate = orotate + 5-phospho-alpha-D-ribose 1-diphosphate. It participates in pyrimidine metabolism; UMP biosynthesis via de novo pathway; UMP from orotate: step 1/2. In terms of biological role, catalyzes the transfer of a ribosyl phosphate group from 5-phosphoribose 1-diphosphate to orotate, leading to the formation of orotidine monophosphate (OMP). The protein is Orotate phosphoribosyltransferase of Agathobacter rectalis (strain ATCC 33656 / DSM 3377 / JCM 17463 / KCTC 5835 / VPI 0990) (Eubacterium rectale).